Here is a 311-residue protein sequence, read N- to C-terminus: Probable protein phosphatase 2C 59 (311 aa).

Positions 1–14 are enriched in low complexity; it reads MGYLNSVLSSSSQV. The segment at 1–26 is disordered; it reads MGYLNSVLSSSSQVHSDDGPVSGGGL. Residues 33-279 form the PPM-type phosphatase domain; the sequence is SYGYASSPGK…DNITCVVVRF (247 aa). Residues D69, G70, D231, and D270 each contribute to the Mn(2+) site.

Belongs to the PP2C family. In terms of assembly, interacts with the Pseudomonas syringae pv. maculicola effector HopW1-1 (via C-terminus). It depends on Mg(2+) as a cofactor. Mn(2+) serves as cofactor.

It carries out the reaction O-phospho-L-seryl-[protein] + H2O = L-seryl-[protein] + phosphate. The catalysed reaction is O-phospho-L-threonyl-[protein] + H2O = L-threonyl-[protein] + phosphate. With respect to regulation, inhibited by sodium fluoride (NaF). Its function is as follows. Protein phosphatase that modulates defense response to pathogenic bacteria, conferring resistance and promoting salicylic acid (SA) accumulation. This is Probable protein phosphatase 2C 59 (WIN2) from Arabidopsis thaliana (Mouse-ear cress).